The following is a 495-amino-acid chain: Methyl viologen resistance protein SmvA (495 aa).

14 helical membrane-spanning segments follow: residues 5–25 (WLTL…ATVL), 44–64 (LWII…MGAL), 73–93 (LLML…FSHT), 96–116 (WLIA…PATL), 135–155 (VWAA…GILL), 158–178 (FYWG…MGLT), 192–212 (PLNL…VYSA), 220–240 (LSLW…GLFI), 260–280 (IILS…GFEL), 299–319 (VFML…GVLV), 327–347 (VATG…MTDF), 357–377 (LMAL…SAIM), 391–411 (IETM…GLLL), and 469–489 (VALS…WFSL).

Belongs to the major facilitator superfamily. TCR/Tet family.

Its subcellular location is the cell inner membrane. In terms of biological role, major efflux pump for acriflavine and other quaternary ammonium compounds (QACs). Also required for resistance to methyl viologen. This chain is Methyl viologen resistance protein SmvA (smvA), found in Salmonella typhimurium (strain LT2 / SGSC1412 / ATCC 700720).